The sequence spans 151 residues: Metalloproteinase inhibitor 3 (151 aa).

In terms of domain architecture, NTR spans 1-108 (CNSDIVIRAK…GLNYRYHLGC (108 aa)). 3 disulfides stabilise this stretch: Cys-1-Cys-108, Cys-115-Cys-120, and Cys-128-Cys-149. The segment at 53 to 54 (ES) is involved in metalloproteinase-binding. The segment at 71–151 (GRVYDGKVYT…YQSKHYACIR (81 aa)) is mediates interaction with EFEMP1.

It belongs to the protease inhibitor I35 (TIMP) family. Interacts with EFEMP1.

It localises to the secreted. Its subcellular location is the extracellular space. The protein resides in the extracellular matrix. Its function is as follows. Complexes with metalloproteinases (such as collagenases) and irreversibly inactivates them by binding to their catalytic zinc cofactor. May form part of a tissue-specific acute response to remodeling stimuli. This chain is Metalloproteinase inhibitor 3 (TIMP3), found in Oryctolagus cuniculus (Rabbit).